The primary structure comprises 381 residues: Cytochrome b (381 aa).

4 helical membrane-spanning segments follow: residues 31–51, 75–97, 112–132, and 178–198; these read FGFL…FLAM, WLLR…IHIF, VWVI…IGYV, and FFSL…VHLA. Heme b is bound by residues H81 and H95. Residues H182 and H196 each coordinate heme b. H201 contributes to the a ubiquinone binding site. 4 helical membrane passes run 224–244, 288–308, 320–340, and 347–367; these read FIVK…IFVY, LGGV…PWIH, LYRL…WIGG, and YVII…ILLP.

The protein belongs to the cytochrome b family. In terms of assembly, the main subunits of complex b-c1 are: cytochrome b, cytochrome c1 and the Rieske protein. The cofactor is heme b.

Its subcellular location is the mitochondrion inner membrane. Its function is as follows. Component of the ubiquinol-cytochrome c reductase complex (complex III or cytochrome b-c1 complex) that is part of the mitochondrial respiratory chain. The b-c1 complex mediates electron transfer from ubiquinol to cytochrome c. Contributes to the generation of a proton gradient across the mitochondrial membrane that is then used for ATP synthesis. The polypeptide is Cytochrome b (MT-CYB) (Chondrus crispus (Carrageen Irish moss)).